Reading from the N-terminus, the 75-residue chain is Protein SlyX homolog (75 aa).

It belongs to the SlyX family.

The protein is Protein SlyX homolog of Chromobacterium violaceum (strain ATCC 12472 / DSM 30191 / JCM 1249 / CCUG 213 / NBRC 12614 / NCIMB 9131 / NCTC 9757 / MK).